The sequence spans 359 residues: Methylthioribose-1-phosphate isomerase (359 aa).

Residues 50–52, arginine 93, and glutamine 200 contribute to the substrate site; that span reads RGA. Aspartate 241 acts as the Proton donor in catalysis. 251 to 252 serves as a coordination point for substrate; it reads NK.

It belongs to the eIF-2B alpha/beta/delta subunits family. MtnA subfamily.

It catalyses the reaction 5-(methylsulfanyl)-alpha-D-ribose 1-phosphate = 5-(methylsulfanyl)-D-ribulose 1-phosphate. The protein operates within amino-acid biosynthesis; L-methionine biosynthesis via salvage pathway; L-methionine from S-methyl-5-thio-alpha-D-ribose 1-phosphate: step 1/6. Functionally, catalyzes the interconversion of methylthioribose-1-phosphate (MTR-1-P) into methylthioribulose-1-phosphate (MTRu-1-P). The polypeptide is Methylthioribose-1-phosphate isomerase (Symbiobacterium thermophilum (strain DSM 24528 / JCM 14929 / IAM 14863 / T)).